We begin with the raw amino-acid sequence, 363 residues long: Glutamate 5-kinase (363 aa).

Lys6 contributes to the ATP binding site. Residues Ser46, Asp133, and Asn145 each contribute to the substrate site. Residues 165 to 166 (TD) and 207 to 213 (TGGMHTK) contribute to the ATP site. The PUA domain occupies 271–349 (HGRLLLDGGA…REIEALLGYT (79 aa)).

It belongs to the glutamate 5-kinase family.

It localises to the cytoplasm. The enzyme catalyses L-glutamate + ATP = L-glutamyl 5-phosphate + ADP. The protein operates within amino-acid biosynthesis; L-proline biosynthesis; L-glutamate 5-semialdehyde from L-glutamate: step 1/2. Catalyzes the transfer of a phosphate group to glutamate to form L-glutamate 5-phosphate. The sequence is that of Glutamate 5-kinase from Deinococcus radiodurans (strain ATCC 13939 / DSM 20539 / JCM 16871 / CCUG 27074 / LMG 4051 / NBRC 15346 / NCIMB 9279 / VKM B-1422 / R1).